The following is a 364-amino-acid chain: 1-acyl-sn-glycerol-3-phosphate acyltransferase epsilon (364 aa).

Helical transmembrane passes span 15 to 35 and 61 to 81; these read LLPS…WGVW and MVLF…GDLP. Positions 93–98 match the HXXXXD motif motif; that stretch reads HQSTVD. A helical membrane pass occupies residues 344–364; it reads LYVNTWIYGTLLGCLWVTIKA.

It belongs to the 1-acyl-sn-glycerol-3-phosphate acyltransferase family. As to expression, widely expressed.

Its subcellular location is the endoplasmic reticulum membrane. The protein resides in the nucleus envelope. It localises to the mitochondrion. It catalyses the reaction a 1-acyl-sn-glycero-3-phosphate + an acyl-CoA = a 1,2-diacyl-sn-glycero-3-phosphate + CoA. The enzyme catalyses 1-(9Z-octadecenoyl)-sn-glycero-3-phosphate + tetradecanoyl-CoA = 1-(9Z)-octadecenoyl-2-tetradecanoyl-sn-glycero-3-phosphate + CoA. The catalysed reaction is pentadecanoyl-CoA + 1-(9Z-octadecenoyl)-sn-glycero-3-phosphate = 1-(9Z)-octadecenoyl-2-pentadecanoyl-sn-glycero-3-phosphate + CoA. It carries out the reaction 1-(9Z-octadecenoyl)-sn-glycero-3-phosphate + octadecanoyl-CoA = 1-(9Z-octadecenoyl)-2-octadecanoyl-sn-glycero-3-phosphate + CoA. It catalyses the reaction nonadecanoyl-CoA + 1-(9Z-octadecenoyl)-sn-glycero-3-phosphate = 1-(9Z)-octadecenoyl-2-nonadecanoyl-sn-glycero-3-phosphate + CoA. The enzyme catalyses 1-(9Z-octadecenoyl)-sn-glycero-3-phosphoethanolamine + (9Z)-octadecenoyl-CoA = 1,2-di-(9Z-octadecenoyl)-sn-glycero-3-phosphoethanolamine + CoA. The catalysed reaction is 1-(9Z-octadecenoyl)-sn-glycero-3-phosphocholine + (9Z)-octadecenoyl-CoA = 1,2-di-(9Z-octadecenoyl)-sn-glycero-3-phosphocholine + CoA. It carries out the reaction 1-(9Z-octadecenoyl)-sn-glycero-3-phospho-(1D-myo-inositol) + (5Z,8Z,11Z,14Z)-eicosatetraenoyl-CoA = 1-(9Z-octadecenoyl)-2-(5Z,8Z,11Z,14Z-eicosatetraenoyl)-sn-glycero-3-phospho-1D-myo-inositol + CoA. It catalyses the reaction 1-(9Z-octadecenoyl)-sn-glycero-3-phospho-L-serine + (9Z)-octadecenoyl-CoA = 1,2-di-(9Z)-octadecenoyl-sn-glycero-3-phospho-L-serine + CoA. The enzyme catalyses 1-(9Z-octadecenoyl)-sn-glycero-3-phospho-L-serine + (5Z,8Z,11Z,14Z)-eicosatetraenoyl-CoA = 1-(9Z-octadecenoyl)-2-(5Z,8Z,11Z,14Z-eicosatetraenoyl)-sn-glycero-3-phospho-L-serine + CoA. The catalysed reaction is 1-hexadecanoyl-sn-glycero-3-phosphate + (9Z)-octadecenoyl-CoA = 1-hexadecanoyl-2-(9Z-octadecenoyl)-sn-glycero-3-phosphate + CoA. It carries out the reaction 1-heptadecanoyl-sn-glycero-3-phosphate + (9Z)-octadecenoyl-CoA = 1-heptadecanoyl-2-(9Z)-octadecenoyl-sn-glycero-3-phosphate + CoA. It catalyses the reaction 1-(5Z,8Z,11Z,14Z-eicosatetraenoyl)-sn-glycero-3-phosphate + (9Z)-octadecenoyl-CoA = 1-(5Z,8Z,11Z,14Z)-eicosatetraenoyl-2-(9Z)-octadecenoyl-sn-glycero-3-phosphate + CoA. The enzyme catalyses 1-octadecanoyl-sn-glycero-3-phosphate + (9Z)-octadecenoyl-CoA = 1-octadecanoyl-2-(9Z-octadecenoyl)-sn-glycero-3-phosphate + CoA. The catalysed reaction is 1-(9Z-octadecenoyl)-sn-glycero-3-phosphate + (5Z,8Z,11Z,14Z)-eicosatetraenoyl-CoA = 1-(9Z)-octadecenoyl-2-(5Z,8Z,11Z,14Z)-eicosatetraenoyl-sn-glycero-3-phosphate + CoA. It carries out the reaction heptadecanoyl-CoA + 1-(9Z-octadecenoyl)-sn-glycero-3-phosphate = 1-(9Z)-octadecenoyl-2-heptadecanoyl-sn-glycero-3-phosphate + CoA. It catalyses the reaction 1-(9Z-octadecenoyl)-sn-glycero-3-phosphocholine + (5Z,8Z,11Z,14Z)-eicosatetraenoyl-CoA = 1-(9Z)-octadecenoyl-2-(5Z,8Z,11Z,14Z)-icosatetraenoyl-sn-glycero-3-phosphocholine + CoA. The enzyme catalyses 1-(9Z-octadecenoyl)-sn-glycero-3-phosphate + (9Z)-octadecenoyl-CoA = 1,2-di-(9Z-octadecenoyl)-sn-glycero-3-phosphate + CoA. The catalysed reaction is 1-(9Z-octadecenoyl)-sn-glycero-3-phosphate + hexadecanoyl-CoA = 1-hexadecanoyl-2-(9Z-octadecenoyl)-sn-glycero-3-phosphate + CoA. It participates in phospholipid metabolism; CDP-diacylglycerol biosynthesis; CDP-diacylglycerol from sn-glycerol 3-phosphate: step 2/3. Functionally, converts 1-acyl-sn-glycerol-3-phosphate (lysophosphatidic acid or LPA) into 1,2-diacyl-sn-glycerol-3-phosphate (phosphatidic acid or PA) by incorporating an acyl moiety at the sn-2 position of the glycerol backbone. Acts on LPA containing saturated or unsaturated fatty acids C15:0-C20:4 at the sn-1 position using C18:1-CoA as the acyl donor. Also acts on lysophosphatidylethanolamine using oleoyl-CoA, but not arachidonoyl-CoA, and lysophosphatidylinositol using arachidonoyl-CoA, but not oleoyl-CoA. Activity toward lysophosphatidylglycerol not detectable. The sequence is that of 1-acyl-sn-glycerol-3-phosphate acyltransferase epsilon (AGPAT5) from Homo sapiens (Human).